The primary structure comprises 353 residues: MAYEKELDAAKKAASLAARLCQKVQKALLQSDVQSKSDKSPVTVADYGSQAVVSLVLEKELSSEPFSLVAEEDSGDLRKDGSQDTLERITKLVNDTLATEESFNGSTLSTDDLLRAIDCGTSEGGPNGRHWVLDPIDGTKGFLRGDQYAVALGLLEEGKVVLGVLACPNLPLASIAGNNKNKSSSDEIGCLFFATIGSGTYMQLLDSKSSPVKVQVSSVENPEEASFFESFEGAHSLHDLSSSIANKLGVKAPPVRIDSQAKYGALSRGDGAIYLRFPHKGYREKIWDHVAGAIVVTEAGGIVTDAAGKPLDFSKGKYLDLDTGIIVANEKLMPLLLKAVRDSIAEQEKASAL.

The Proton acceptor role is filled by Asp46. 4 residues coordinate Mg(2+): Glu71, Asp134, Ile136, and Asp137. Thr139 acts as the Proton acceptor in catalysis. Residues Thr139, His235, Ser259, Lys262, Arg276, and Asp288 each contribute to the adenosine 3',5'-bisphosphate site. The AMP site is built by His235, Ser259, Lys262, Arg276, and Asp288. Asp288 is a binding site for Mg(2+).

It belongs to the inositol monophosphatase superfamily. Mg(2+) serves as cofactor. Expressed in roots, leaves, stems, flowers and siliques.

It catalyses the reaction 3'-phosphoadenylyl sulfate + H2O = adenosine 5'-phosphosulfate + phosphate. The enzyme catalyses adenosine 3',5'-bisphosphate + H2O = AMP + phosphate. The catalysed reaction is adenosine 2',5'-bisphosphate + H2O = AMP + phosphate. It carries out the reaction 1D-myo-inositol 1,4-bisphosphate + H2O = 1D-myo-inositol 4-phosphate + phosphate. It catalyses the reaction 1D-myo-inositol 1,3,4-trisphosphate + H2O = 1D-myo-inositol 3,4-bisphosphate + phosphate. The protein operates within signal transduction; phosphatidylinositol signaling pathway. Inhibited non-competitively by Li(+) (IC(50)=0.20 mM) and Na(+) (IC(50)=200 mM). Phosphatase that converts adenosine 3'-phosphate 5'-phosphosulfate (PAPS) to adenosine 5'-phosphosulfate (APS) and 3'(2')-phosphoadenosine 5'-phosphate (PAP) to AMP. May regulate the flux of sulfur in the sulfur-activation pathway by converting PAPS to APS. May play a role in the biosynthesis of sulfate conjugates and RNA processing. Is also able to hydrolyze inositol 1,4-bisphosphate and inositol 1,3,4-trisphosphate. Could be considered as a negative regulator of abscisic acid (ABA)- and stress-responsive genes, through modulating the inositol 1,4,5-trisphosphate (IP3) turnover. Is also involved in salt tolerance. Acts as a suppressor of virus- and transgene-induced silencing. The protein is 3'(2'),5'-bisphosphate nucleotidase 1 of Arabidopsis thaliana (Mouse-ear cress).